We begin with the raw amino-acid sequence, 73 residues long: Sodium channel neurotoxin MeuNaTxalpha-13 (73 aa).

The N-terminal stretch at 1 to 5 (TGVES) is a signal peptide. One can recognise an LCN-type CS-alpha/beta domain in the interval 7 to 71 (RDAYIAKPHN…VPIRIPGKCH (65 aa)). Intrachain disulfides connect cysteine 17–cysteine 70, cysteine 21–cysteine 43, cysteine 29–cysteine 53, and cysteine 33–cysteine 55. A propeptide spans 72 to 73 (RR) (removed by a carboxypeptidase).

This sequence belongs to the long (4 C-C) scorpion toxin superfamily. Sodium channel inhibitor family. Alpha subfamily. As to expression, expressed by the venom gland.

It localises to the secreted. Alpha toxins bind voltage-independently at site-3 of sodium channels (Nav) and inhibit the inactivation of the activated channels, thereby blocking neuronal transmission. The polypeptide is Sodium channel neurotoxin MeuNaTxalpha-13 (Mesobuthus eupeus (Lesser Asian scorpion)).